Reading from the N-terminus, the 225-residue chain is Ribosomal RNA large subunit methyltransferase E (225 aa).

5 residues coordinate S-adenosyl-L-methionine: Gly-79, Trp-81, Asp-97, Asp-113, and Asp-137. Lys-177 functions as the Proton acceptor in the catalytic mechanism.

This sequence belongs to the class I-like SAM-binding methyltransferase superfamily. RNA methyltransferase RlmE family.

It is found in the cytoplasm. The catalysed reaction is uridine(2552) in 23S rRNA + S-adenosyl-L-methionine = 2'-O-methyluridine(2552) in 23S rRNA + S-adenosyl-L-homocysteine + H(+). Functionally, specifically methylates the uridine in position 2552 of 23S rRNA at the 2'-O position of the ribose in the fully assembled 50S ribosomal subunit. This is Ribosomal RNA large subunit methyltransferase E from Acidiphilium cryptum (strain JF-5).